Consider the following 417-residue polypeptide: Glutamate-1-semialdehyde 2,1-aminomutase (417 aa).

Lys263 carries the N6-(pyridoxal phosphate)lysine modification.

Belongs to the class-III pyridoxal-phosphate-dependent aminotransferase family. HemL subfamily. It depends on pyridoxal 5'-phosphate as a cofactor.

The protein localises to the cytoplasm. The enzyme catalyses (S)-4-amino-5-oxopentanoate = 5-aminolevulinate. It participates in porphyrin-containing compound metabolism; protoporphyrin-IX biosynthesis; 5-aminolevulinate from L-glutamyl-tRNA(Glu): step 2/2. The polypeptide is Glutamate-1-semialdehyde 2,1-aminomutase (Methanospirillum hungatei JF-1 (strain ATCC 27890 / DSM 864 / NBRC 100397 / JF-1)).